A 425-amino-acid polypeptide reads, in one-letter code: 1,4-beta-D-glucan glucohydrolase (425 aa).

E164 serves as the catalytic Proton donor. E349 functions as the Nucleophile in the catalytic mechanism.

It belongs to the glycosyl hydrolase 1 family. As to quaternary structure, monomer.

It catalyses the reaction Hydrolysis of (1-&gt;4)-linkages in (1-&gt;4)-beta-D-glucans, to remove successive glucose units.. It carries out the reaction Hydrolysis of terminal, non-reducing beta-D-glucosyl residues with release of beta-D-glucose.. It participates in glycan metabolism; cellulose degradation. It functions in the pathway glycan metabolism; beta-D-glucan degradation. Broad substrate specificity glycosidase. Releases glucose from soluble glucooligomers, with a preference for longer oligomers; acts more readily on cellotetraose than on cellobiose. Displays similar activities towards the disaccharides lactose and cellobiose. Is also able to hydrolyze various aryl-beta-glycosides in vitro. This Thermotoga neapolitana protein is 1,4-beta-D-glucan glucohydrolase (bglA).